Here is a 60-residue protein sequence, read N- to C-terminus: Large ribosomal subunit protein bL32 (60 aa).

Disordered stretches follow at residues 1–28 (MAVQ…PGIA) and 41–60 (HISP…KSEA). A compositionally biased stretch (basic residues) spans 9 to 19 (SPSKRGMHRSH).

The protein belongs to the bacterial ribosomal protein bL32 family.

The chain is Large ribosomal subunit protein bL32 from Verminephrobacter eiseniae (strain EF01-2).